The chain runs to 173 residues: Probable xanthine dehydrogenase subunit E (173 aa).

The region spanning 14–90 (EQFRMTVNGQ…GHSITTIEGL (77 aa)) is the 2Fe-2S ferredoxin-type domain. [2Fe-2S] cluster is bound by residues Cys52, Cys57, Cys60, Cys72, Cys110, Cys113, Cys145, and Cys147.

In terms of assembly, could be composed of four subunits: PucA, PucC, PucD and PucE. The cofactor is [2Fe-2S] cluster.

The catalysed reaction is xanthine + NAD(+) + H2O = urate + NADH + H(+). The enzyme catalyses hypoxanthine + NAD(+) + H2O = xanthine + NADH + H(+). It functions in the pathway purine metabolism; hypoxanthine degradation; urate from hypoxanthine: step 1/2. It participates in purine metabolism; hypoxanthine degradation; urate from hypoxanthine: step 2/2. In terms of biological role, oxidizes hypoxanthine and xanthine to uric acid. The polypeptide is Probable xanthine dehydrogenase subunit E (pucE) (Bacillus subtilis (strain 168)).